The sequence spans 407 residues: BMP-like protein unc-129 (407 aa).

The signal sequence occupies residues 1 to 18; sequence MRRLPIVLLLSVFSIANC. 3 N-linked (GlcNAc...) asparagine glycosylation sites follow: Asn-27, Asn-42, and Asn-211. Residues 252–283 form a disordered region; sequence DDREPIKRKNGKKNSLSEEISSEDVWQGFGEE. N-linked (GlcNAc...) asparagine glycosylation occurs at Asn-395.

The protein belongs to the TGF-beta family. As to quaternary structure, interacts with netrin receptor unc-5; the interaction is direct.

The protein localises to the secreted. It localises to the extracellular space. Its function is as follows. Required for the migration of axonal growth-cones and distal tip cells (DTC) along the dorsal-ventral axis of the body wall. Acts cell nonautonomously and independently of the classical daf-4, sma-6 or daf-1 TGFbeta receptor signaling. During axon migration, facilitates long-range repulsive guidance of unc-6/netrin by enhancing unc-5-unc-40 signaling at the expense of unc-5 alone signaling, probably through direct interaction with receptor unc-5. Involved in cell-cell contact formation in sensory rays in the developing male tail, via a pathway involving plx-2 and mab-20/semaphorin-2A. The protein is BMP-like protein unc-129 of Caenorhabditis elegans.